An 88-amino-acid polypeptide reads, in one-letter code: Large ribosomal subunit protein bL27 (88 aa).

It belongs to the bacterial ribosomal protein bL27 family.

This chain is Large ribosomal subunit protein bL27, found in Acidobacterium capsulatum (strain ATCC 51196 / DSM 11244 / BCRC 80197 / JCM 7670 / NBRC 15755 / NCIMB 13165 / 161).